A 195-amino-acid chain; its full sequence is Phosphoheptose isomerase (195 aa).

An SIS domain is found at 35–195 (IVSKILQAGN…IVEYNLFKME (161 aa)). Position 51–53 (51–53 (NGG)) interacts with substrate. Zn(2+) contacts are provided by H60 and E64. Substrate is bound by residues E64, 95–96 (ND), 121–123 (STS), S126, and Q173. Q173 and H181 together coordinate Zn(2+).

Belongs to the SIS family. GmhA subfamily. The cofactor is Zn(2+).

It is found in the cytoplasm. The enzyme catalyses 2 D-sedoheptulose 7-phosphate = D-glycero-alpha-D-manno-heptose 7-phosphate + D-glycero-beta-D-manno-heptose 7-phosphate. Its pathway is carbohydrate biosynthesis; D-glycero-D-manno-heptose 7-phosphate biosynthesis; D-glycero-alpha-D-manno-heptose 7-phosphate and D-glycero-beta-D-manno-heptose 7-phosphate from sedoheptulose 7-phosphate: step 1/1. Its function is as follows. Catalyzes the isomerization of sedoheptulose 7-phosphate in D-glycero-D-manno-heptose 7-phosphate. This is Phosphoheptose isomerase from Leptospira interrogans serogroup Icterohaemorrhagiae serovar copenhageni (strain Fiocruz L1-130).